A 327-amino-acid chain; its full sequence is Methionine import ATP-binding protein MetN (327 aa).

The ABC transporter domain occupies 3-239; it reads VELKNIEKIY…PKHAVTKELI (237 aa). Position 36–43 (36–43) interacts with ATP; the sequence is GYSGAGKS.

It belongs to the ABC transporter superfamily. Methionine importer (TC 3.A.1.24) family. In terms of assembly, the complex is composed of two ATP-binding proteins (MetN), two transmembrane proteins (MetI) and a solute-binding protein (MetQ).

Its subcellular location is the cell inner membrane. The catalysed reaction is L-methionine(out) + ATP + H2O = L-methionine(in) + ADP + phosphate + H(+). It carries out the reaction D-methionine(out) + ATP + H2O = D-methionine(in) + ADP + phosphate + H(+). Part of the ABC transporter complex MetNIQ involved in methionine import. Responsible for energy coupling to the transport system. This is Methionine import ATP-binding protein MetN from Helicobacter acinonychis (strain Sheeba).